Here is a 75-residue protein sequence, read N- to C-terminus: Small ribosomal subunit protein bS16 (75 aa).

Belongs to the bacterial ribosomal protein bS16 family.

The protein is Small ribosomal subunit protein bS16 of Aliarcobacter butzleri (strain RM4018) (Arcobacter butzleri).